Reading from the N-terminus, the 413-residue chain is MNVPHPHRPSLWLNARLATMDPAHGAPYGALEGHALLLRDGHIEAVLPQAEADAAAFDGEVFDLQGRWVTPGFVDCHTHLVYGGSRAAEWEKRLTGVPYQQIAAEGGGIVSTVRATRWLDEEELALASLPRLKALMAEGVTTVEIKSGYGLTLADELKQLAAARRLQASLPVEVATTLLAAHAVPPEYAGDADGYVDLVVESILPVAARAGLAEAVDAFCESVGFSPAQTRRVFEAARAHGLKVKGHVEQLSNLHGAELVAEFGGLSADHIEYLDDAGVAALKRAGTVAVLLPGAFYFLRETQKPPVDKLRAAGVPMAVSTDLNPGTSPFASIRLAMNQACVLFGLTPEEALAGVTRHAAQALGRGATHGRLAAGCVADLLVWDIAHPAELAYSVGVPLLKQRVFRGAAQHID.

Fe(3+)-binding residues include His-77 and His-79. The Zn(2+) site is built by His-77 and His-79. Residues Arg-86, Tyr-149, and His-182 each coordinate 4-imidazolone-5-propanoate. Tyr-149 lines the N-formimidoyl-L-glutamate pocket. Residue His-247 coordinates Fe(3+). His-247 contributes to the Zn(2+) binding site. A 4-imidazolone-5-propanoate-binding site is contributed by Gln-250. Asp-322 is a Fe(3+) binding site. Asp-322 contributes to the Zn(2+) binding site. N-formimidoyl-L-glutamate is bound by residues Asn-324 and Gly-326. 4-imidazolone-5-propanoate is bound at residue Thr-327.

Belongs to the metallo-dependent hydrolases superfamily. HutI family. Zn(2+) serves as cofactor. The cofactor is Fe(3+).

It is found in the cytoplasm. The catalysed reaction is 4-imidazolone-5-propanoate + H2O = N-formimidoyl-L-glutamate. It participates in amino-acid degradation; L-histidine degradation into L-glutamate; N-formimidoyl-L-glutamate from L-histidine: step 3/3. Functionally, catalyzes the hydrolytic cleavage of the carbon-nitrogen bond in imidazolone-5-propanoate to yield N-formimidoyl-L-glutamate. It is the third step in the universal histidine degradation pathway. The chain is Imidazolonepropionase from Chromobacterium violaceum (strain ATCC 12472 / DSM 30191 / JCM 1249 / CCUG 213 / NBRC 12614 / NCIMB 9131 / NCTC 9757 / MK).